A 117-amino-acid polypeptide reads, in one-letter code: Ig heavy chain V region MOPC 47A (117 aa).

Positions 1 to 113 (EVKLVESGGG…FAYWGZGTLV (113 aa)) constitute an Ig-like domain.

This is Ig heavy chain V region MOPC 47A from Mus musculus (Mouse).